We begin with the raw amino-acid sequence, 333 residues long: Malate dehydrogenase (333 aa).

NAD(+)-binding positions include 10-15 (GGGQIG) and aspartate 34. Residues arginine 83 and arginine 89 each contribute to the substrate site. Residues asparagine 96 and 119–121 (ITN) each bind NAD(+). Residues asparagine 121 and arginine 152 each coordinate substrate. Histidine 176 functions as the Proton acceptor in the catalytic mechanism.

Belongs to the LDH/MDH superfamily. MDH type 3 family.

The enzyme catalyses (S)-malate + NAD(+) = oxaloacetate + NADH + H(+). In terms of biological role, catalyzes the reversible oxidation of malate to oxaloacetate. The chain is Malate dehydrogenase from Parvibaculum lavamentivorans (strain DS-1 / DSM 13023 / NCIMB 13966).